Reading from the N-terminus, the 570-residue chain is Urease subunit alpha (570 aa).

The Urease domain occupies 131 to 570 (GGVDTHIHFI…LPMAQRYFLF (440 aa)). Residues H136, H138, and K219 each contribute to the Ni(2+) site. Residue K219 is modified to N6-carboxylysine. Residue H221 coordinates substrate. Residues H248 and H274 each coordinate Ni(2+). The active-site Proton donor is H322. D362 lines the Ni(2+) pocket.

Belongs to the metallo-dependent hydrolases superfamily. Urease alpha subunit family. Heterotrimer of UreA (gamma), UreB (beta) and UreC (alpha) subunits. Three heterotrimers associate to form the active enzyme. Ni cation serves as cofactor. Carboxylation allows a single lysine to coordinate two nickel ions.

It is found in the cytoplasm. It carries out the reaction urea + 2 H2O + H(+) = hydrogencarbonate + 2 NH4(+). The protein operates within nitrogen metabolism; urea degradation; CO(2) and NH(3) from urea (urease route): step 1/1. The sequence is that of Urease subunit alpha from Methylocella silvestris (strain DSM 15510 / CIP 108128 / LMG 27833 / NCIMB 13906 / BL2).